We begin with the raw amino-acid sequence, 541 residues long: Chaperonin GroEL 5 (541 aa).

ATP-binding positions include 30–33 (TLGP), G415, and D496.

The protein belongs to the chaperonin (HSP60) family. As to quaternary structure, forms a cylinder of 14 subunits composed of two heptameric rings stacked back-to-back. Interacts with the co-chaperonin GroES.

It is found in the cytoplasm. It catalyses the reaction ATP + H2O + a folded polypeptide = ADP + phosphate + an unfolded polypeptide.. Its function is as follows. Together with its co-chaperonin GroES, plays an essential role in assisting protein folding. The GroEL-GroES system forms a nano-cage that allows encapsulation of the non-native substrate proteins and provides a physical environment optimized to promote and accelerate protein folding. The polypeptide is Chaperonin GroEL 5 (Bradyrhizobium diazoefficiens (strain JCM 10833 / BCRC 13528 / IAM 13628 / NBRC 14792 / USDA 110)).